A 349-amino-acid polypeptide reads, in one-letter code: Anthranilate phosphoribosyltransferase (349 aa).

5-phospho-alpha-D-ribose 1-diphosphate-binding positions include Gly82, 85–86 (GD), 92–95 (NVST), 110–118 (KHGNRAVSG), and Ser122. Gly82 is a binding site for anthranilate. Mg(2+) is bound at residue Ser94. Asn113 is an anthranilate binding site. Arg168 contributes to the anthranilate binding site. The Mg(2+) site is built by Asp227 and Glu228.

This sequence belongs to the anthranilate phosphoribosyltransferase family. In terms of assembly, homodimer. It depends on Mg(2+) as a cofactor.

It carries out the reaction N-(5-phospho-beta-D-ribosyl)anthranilate + diphosphate = 5-phospho-alpha-D-ribose 1-diphosphate + anthranilate. The protein operates within amino-acid biosynthesis; L-tryptophan biosynthesis; L-tryptophan from chorismate: step 2/5. Catalyzes the transfer of the phosphoribosyl group of 5-phosphorylribose-1-pyrophosphate (PRPP) to anthranilate to yield N-(5'-phosphoribosyl)-anthranilate (PRA). The sequence is that of Anthranilate phosphoribosyltransferase from Pseudomonas putida (Arthrobacter siderocapsulatus).